A 347-amino-acid chain; its full sequence is 5-deoxyribose 1-phosphate isomerase (347 aa).

Substrate is bound by residues 48–50 (RGA), Arg-91, and Gln-198. Asp-239 serves as the catalytic Proton donor. 249 to 250 (NK) is a binding site for substrate.

Belongs to the EIF-2B alpha/beta/delta subunits family. DrdI subfamily.

It carries out the reaction 5-deoxy-alpha-D-ribose 1-phosphate = 5-deoxy-D-ribulose 1-phosphate. It functions in the pathway carbohydrate degradation. Functionally, catalyzes the isomerization of 5-deoxy-alpha-D-ribose 1-phosphate to 5-deoxy-D-ribulose 1-phosphate, as part of a 5-deoxyribose salvage pathway that recycles this toxic radical SAM enzyme by-product to mainstream metabolites. In Bacillus thuringiensis subsp. konkukian (strain 97-27), this protein is 5-deoxyribose 1-phosphate isomerase.